A 434-amino-acid polypeptide reads, in one-letter code: MKTYRSESLFAEARSLFPGGVNSPVRAFRAVGGAPRFIARGEGAFLVDVDGNRYIDYVLSWGPLILGHAHPNVVAAIAEQAAHGTSFGAPTELESELARLITQAMPSVEMVRFVSSGTEAAMSALRLARAATRRDKVIKFAGCYHGHFDGFLVQAGSGVATLGLPDSPGVTAATAASTLTAPYNDLDAVESLLKANPGEVAAIAVEPVAGNMGLVLPQPGFLEGLRRLADEHGALLIFDEVMTGFRVGYGGAQGKYGITPDLTCLGKVIGGGLPAAAYGGRRDLMELIAPAGPVYQAGTLSGNPLAMAAGAATLRAIRAPGVFEQLERAAAMLCSGFEHAAAEADIALRTAYAGSMWGFFFTDEPVVDYVSAKKSDTQRYAQFFHAMLERGIYLAPAQFEASFVSLAHSDALIQETIAAAADALRSIQNAARKG.

An N6-(pyridoxal phosphate)lysine modification is found at lysine 267.

It belongs to the class-III pyridoxal-phosphate-dependent aminotransferase family. HemL subfamily. Homodimer. It depends on pyridoxal 5'-phosphate as a cofactor.

Its subcellular location is the cytoplasm. It carries out the reaction (S)-4-amino-5-oxopentanoate = 5-aminolevulinate. It participates in porphyrin-containing compound metabolism; protoporphyrin-IX biosynthesis; 5-aminolevulinate from L-glutamyl-tRNA(Glu): step 2/2. Its pathway is porphyrin-containing compound metabolism; chlorophyll biosynthesis. This is Glutamate-1-semialdehyde 2,1-aminomutase from Roseiflexus castenholzii (strain DSM 13941 / HLO8).